The chain runs to 329 residues: Putative GTPase Obg (329 aa).

The region spanning 1 to 159 is the Obg domain; that stretch reads MQFIDQARIM…WPLQLELKLL (159 aa). In terms of domain architecture, OBG-type G spans 160–328; it reads AEVGIIGLPN…LKTQIWQQLG (169 aa). GTP is bound by residues 166–173, 191–195, 213–216, 280–283, and 309–311; these read GLPNAGKS, FTTLI, DIPG, SKIE, and SSA. S173 and T193 together coordinate Mg(2+).

Belongs to the TRAFAC class OBG-HflX-like GTPase superfamily. OBG GTPase family. In terms of assembly, monomer. Requires Mg(2+) as cofactor.

The protein localises to the plastid. Its subcellular location is the organellar chromatophore. In terms of biological role, an essential GTPase which binds GTP, GDP and possibly (p)ppGpp with moderate affinity, with high nucleotide exchange rates and a fairly low GTP hydrolysis rate. This is Putative GTPase Obg from Paulinella chromatophora.